The following is a 567-amino-acid chain: Putative laccase-17 (567 aa).

Positions 1–22 (MPSRGCSCWLLSLALLCSLAAA) are cleaved as a signal peptide. 2 consecutive Plastocyanin-like domains span residues 30-146 (VIRE…PRDG) and 158-310 (ELAP…YGAA). N76 is a glycosylation site (N-linked (GlcNAc...) asparagine). Residues H80, H82, H125, and H127 each contribute to the Cu cation site. N-linked (GlcNAc...) asparagine glycans are attached at residues N187, N241, N298, N312, N327, N365, N368, N378, N388, and N430. The Plastocyanin-like 3 domain maps to 415–551 (DFPANPPVQF…AMAFLVDDGV (137 aa)). The Cu cation site is built by H468, H471, H473, H530, C531, H532, and H536.

The protein belongs to the multicopper oxidase family. Requires Cu cation as cofactor.

It localises to the secreted. The protein localises to the extracellular space. Its subcellular location is the apoplast. The enzyme catalyses 4 hydroquinone + O2 = 4 benzosemiquinone + 2 H2O. Its function is as follows. Lignin degradation and detoxification of lignin-derived products. This chain is Putative laccase-17 (LAC17), found in Oryza sativa subsp. japonica (Rice).